Here is a 217-residue protein sequence, read N- to C-terminus: Probable GTP-binding protein EngB (217 aa).

An EngB-type G domain is found at 40-217 (DVPEIAFAGR…RAAVLQDAMG (178 aa)). Residues 48–55 (GRSNVGKS), 75–79 (GRTQE), 95–98 (DMPG), 162–165 (TKAD), and 196–198 (TSS) each bind GTP. Residues Ser-55 and Thr-77 each coordinate Mg(2+).

The protein belongs to the TRAFAC class TrmE-Era-EngA-EngB-Septin-like GTPase superfamily. EngB GTPase family. Mg(2+) is required as a cofactor.

In terms of biological role, necessary for normal cell division and for the maintenance of normal septation. This is Probable GTP-binding protein EngB from Novosphingobium aromaticivorans (strain ATCC 700278 / DSM 12444 / CCUG 56034 / CIP 105152 / NBRC 16084 / F199).